An 826-amino-acid chain; its full sequence is U4/U6 snRNA-associated-splicing factor PRP24 (826 aa).

4 RRM domains span residues 310 to 385 (TSVF…EAAG), 386 to 463 (ITLY…YSDP), 477 to 554 (REVH…LSVS), and 598 to 670 (RSFA…AVPQ).

The protein localises to the nucleus. Functions as a recycling factor of the spliceosome, a machinery that forms on each precursor-messenger RNA (pre-mRNA) and catalyzes the removal of introns. Chaperones the re-annealing of U4 and U6 snRNAs (small nuclear RNAs) released from previous rounds of splicing, an initial step in reforming the U4/U6-U5 tri-snRNP (small nuclear ribonucleoprotein) that can reassemble into another spliceosome complex; this step involves binding U6 and facilitating the unwinding of the U6 internal stem loop, followed by base-pairing of U6 to U4. This is U4/U6 snRNA-associated-splicing factor PRP24 from Ophiostoma ulmi (Dutch elm disease fungus).